We begin with the raw amino-acid sequence, 244 residues long: Protein crossbronx (244 aa).

The UBC core domain occupies 20–176 (QQEYKILAEY…VLENIKESKE (157 aa)).

It belongs to the ubiquitin-conjugating enzyme family. FTS subfamily.

This chain is Protein crossbronx (cbx), found in Drosophila persimilis (Fruit fly).